The following is a 189-amino-acid chain: Small ribosomal subunit protein uS5 (189 aa).

An S5 DRBM domain is found at 23-86 (FIDKLVHINR…ESAKREMIYV (64 aa)).

The protein belongs to the universal ribosomal protein uS5 family. As to quaternary structure, part of the 30S ribosomal subunit. Contacts proteins S4 and S8.

In terms of biological role, with S4 and S12 plays an important role in translational accuracy. Functionally, located at the back of the 30S subunit body where it stabilizes the conformation of the head with respect to the body. In Bartonella bacilliformis (strain ATCC 35685 / KC583 / Herrer 020/F12,63), this protein is Small ribosomal subunit protein uS5.